The primary structure comprises 152 residues: Large-conductance mechanosensitive channel (152 aa).

A run of 3 helical transmembrane segments spans residues 21 to 41 (IDLA…DSLV), 44 to 64 (VVMP…NKFL), and 92 to 112 (GNFI…FWMV).

Belongs to the MscL family. Homopentamer.

The protein resides in the cell inner membrane. Its function is as follows. Channel that opens in response to stretch forces in the membrane lipid bilayer. May participate in the regulation of osmotic pressure changes within the cell. The protein is Large-conductance mechanosensitive channel of Bordetella pertussis (strain Tohama I / ATCC BAA-589 / NCTC 13251).